The sequence spans 412 residues: 43 kDa receptor-associated protein of the synapse (412 aa).

The N-myristoyl glycine moiety is linked to residue glycine 2. TPR repeat units follow at residues 6–39 (TKQQIEKGLQLYQANETGKALEIWQQVVERSTEL), 83–116 (TEAYLNLARGHEKLCEFSEAVAYCRTCLGAEGGP), 123–156 (GQVCLSMGNAFLGLSAFQKALECFEKALRYAHGN), 163–196 (CRVCCSLGAFYVQLKDYEKALFFPCKSAELVADY), 206–239 (AMSRYHMAAAYRKLGRMDDAMECCEESMKIALQH), 246–279 (ALCLLCFADIHRHRSDIGKALPRYESSLNIMTEI), and 286–319 (AHVLLNIAKCWMTEKKLDKTLGVVQKAEELADAV). Tyrosine 196 carries the phosphotyrosine modification. The RING-type zinc-finger motif lies at 363–403 (CGLCGESIGDQNSQLQALPCSHLFHLKCLQTNGNRGCPNCK). Position 405 is a phosphoserine (serine 405).

It belongs to the RAPsyn family.

The protein localises to the cell membrane. The protein resides in the postsynaptic cell membrane. It localises to the cytoplasm. It is found in the cytoskeleton. Its function is as follows. Postsynaptic protein required for clustering of nicotinic acetylcholine receptors (nAChRs) at the neuromuscular junction. It may link the receptor to the underlying postsynaptic cytoskeleton, possibly by direct association with actin or spectrin. This is 43 kDa receptor-associated protein of the synapse (RAPSN) from Tetronarce californica (Pacific electric ray).